The chain runs to 116 residues: Endocuticle structural glycoprotein ABD-4 (116 aa).

Gln-1 is modified (pyrrolidone carboxylic acid). One can recognise a Chitin-binding type R&amp;R domain in the interval 20–92 (DGSYQWNYET…PQGAHFPTPP (73 aa)). The tract at residues 78–97 (ENGFVPQGAHFPTPPPIPPA) is disordered. The O-linked (GalNAc) threonine; in ADB-4A, ABD-4B and ABD-4C glycan is linked to Thr-90. Thr-107 is a glycosylation site (O-linked (GalNAc) threonine; in ADB-4A and ABD-4B). Thr-111 carries an O-linked (GalNAc) threonine; in ADB-4A glycan. At Pro-116 the chain carries Proline amide.

Post-translationally, 3 variants exists that arise from a sequential glycosylation with N-acetylgalactosamine at three (ABD-4A), two (ABD-4B) or one (ABD-4C) threonine residues.

Its function is as follows. Component of the soft endocuticle of migratory locust. The sequence is that of Endocuticle structural glycoprotein ABD-4 from Locusta migratoria (Migratory locust).